The following is a 151-amino-acid chain: Putative pre-16S rRNA nuclease (151 aa).

The protein belongs to the YqgF nuclease family.

The protein resides in the cytoplasm. Functionally, could be a nuclease involved in processing of the 5'-end of pre-16S rRNA. This Nostoc sp. (strain PCC 7120 / SAG 25.82 / UTEX 2576) protein is Putative pre-16S rRNA nuclease.